The sequence spans 693 residues: Probable L-type lectin-domain containing receptor kinase VI.1 (693 aa).

Residues 1 to 22 (MGIARSINSFMFFFFLMILSNA) form the signal peptide. 7 N-linked (GlcNAc...) asparagine glycosylation sites follow: asparagine 21, asparagine 44, asparagine 71, asparagine 89, asparagine 141, asparagine 180, and asparagine 223. Over 23-311 (SKSSVLAEAT…SNKKGYNSQV (289 aa)) the chain is Extracellular. The interval 33-279 (TAKFTFIGFK…AHYVMGWSFS (247 aa)) is legume-lectin like. Residues 312–332 (IVLIVALSIVTLVLLVLLFIF) form a helical membrane-spanning segment. The Cytoplasmic portion of the chain corresponds to 333–693 (VMYKRRIQEE…VSSSSIVSGR (361 aa)). Positions 368 to 642 (FKESEIIGTG…LRYLNGEENV (275 aa)) constitute a Protein kinase domain. Residues 374 to 382 (IGTGGFGIV) and lysine 396 each bind ATP. Residue aspartate 495 is the Proton acceptor of the active site. Residues 670 to 693 (DRASSSNTFSSFSNVSSSSIVSGR) form a disordered region.

The protein in the C-terminal section; belongs to the protein kinase superfamily. Ser/Thr protein kinase family. It in the N-terminal section; belongs to the leguminous lectin family.

It localises to the cell membrane. The enzyme catalyses L-seryl-[protein] + ATP = O-phospho-L-seryl-[protein] + ADP + H(+). It carries out the reaction L-threonyl-[protein] + ATP = O-phospho-L-threonyl-[protein] + ADP + H(+). This is Probable L-type lectin-domain containing receptor kinase VI.1 (LECRK61) from Arabidopsis thaliana (Mouse-ear cress).